We begin with the raw amino-acid sequence, 538 residues long: Pyruvate kinase (538 aa).

Ser45 is subject to Phosphoserine. Position 72 (Arg72) interacts with substrate. The K(+) site is built by Asn74, Ser76, Asp107, and Thr108. 74–77 provides a ligand contact to ATP; it reads NFSH. ATP contacts are provided by Arg114 and Lys200. Mg(2+) is bound at residue Glu265. 3 residues coordinate substrate: Gly288, Asp289, and Thr321. Asp289 contacts Mg(2+).

Belongs to the pyruvate kinase family. Homotetramer. The cofactor is Mg(2+). K(+) serves as cofactor.

It carries out the reaction pyruvate + ATP = phosphoenolpyruvate + ADP + H(+). The protein operates within carbohydrate degradation; glycolysis; pyruvate from D-glyceraldehyde 3-phosphate: step 5/5. The chain is Pyruvate kinase (pki1) from Hypocrea jecorina (Trichoderma reesei).